Consider the following 610-residue polypeptide: Menin (610 aa).

Positions 214–390 are interaction with FANCD2; that stretch reads GVAERSWLYL…SLLEAGEERP (177 aa). Disordered stretches follow at residues 385-404 and 460-552; these read AGEE…GSAL and REAE…PVLT. Residues 393–402 are compositionally biased toward low complexity; sequence QTQGTQSQGS. Basic and acidic residues predominate over residues 484–500; that stretch reads RRESKPEEPPPPKKPAL. A Phosphoserine modification is found at serine 487. Pro residues-rich tracts occupy residues 512-521 and 537-548; these read PGPPRKPPGT and VPAPAASPPPEG. Serine 543 is modified (phosphoserine). At threonine 594 the chain carries Phosphothreonine.

Component of the MLL-HCF complex, at least composed of KMT2A/MLL1, MEN1, ASH2L, RBBP5, DPY30, WDR5, HCFC1 and HCFC2. Component of the menin-associated histone methyltransferase complex, at least composed of KMT2B/MLL4, MEN1, ASH2L, RBBP5, DPY30 and WDR5. Interacts with POLR2B. Interacts with POLR2A phosphorylated at 'Ser-5', but not with the unphosphorylated, nor 'Ser-2' phosphorylated POLR2A forms. Interacts with FANCD2 and DBF4. Interacts with SMAD3, but not with SMAD2, nor SMAD4. Directly interacts with NFKB1, NFKB2 and RELA. Interacts with JUND (via MBM motif); inhibits the interaction of JUND with MAPK10 and the phosphorylation of JUND by MAP kinases MAPK8 and MAPK10. Interacts with KMT2A (via MBM motif). The KMT2A-MEN1 complex interacts with PSIP1 with a greater affinity as MEN1 enhances interaction of KMT2A with PSIP1.

Its subcellular location is the nucleus. Functionally, essential component of a MLL/SET1 histone methyltransferase (HMT) complex, a complex that specifically methylates 'Lys-4' of histone H3 (H3K4). Functions as a transcriptional regulator. Binds to the TERT promoter and represses telomerase expression. Plays a role in TGFB1-mediated inhibition of cell-proliferation, possibly regulating SMAD3 transcriptional activity. Represses JUND-mediated transcriptional activation on AP1 sites, as well as that mediated by NFKB subunit RELA. Positively regulates HOXC8 and HOXC6 gene expression. May be involved in normal hematopoiesis through the activation of HOXA9 expression. May be involved in DNA repair. The chain is Menin (MEN1) from Bos taurus (Bovine).